A 164-amino-acid chain; its full sequence is Dehydrin Rab16B (164 aa).

Positions 1–164 are disordered; the sequence is MENYQGQHGY…KIKEKLPGQH (164 aa). Residues 25 to 53 show a composition bias toward gly residues; it reads GQYGGGATAPGGGHGAMGMGGHAGAGAGG. The span at 107 to 117 shows a compositional bias: low complexity; the sequence is GNNQQQQQMMG. The span at 147 to 164 shows a compositional bias: basic and acidic residues; the sequence is GEKKGFMDKIKEKLPGQH.

It belongs to the plant dehydrin family.

This chain is Dehydrin Rab16B (RAB16B), found in Oryza sativa subsp. indica (Rice).